The following is a 130-amino-acid chain: Lysozyme C (130 aa).

Residues 1 to 130 (KIYERCELAR…LTPYIRGCGV (130 aa)) form the C-type lysozyme domain. Cystine bridges form between Cys-6-Cys-128, Cys-30-Cys-116, Cys-65-Cys-81, and Cys-77-Cys-95. Active-site residues include Glu-35 and Asp-53.

It belongs to the glycosyl hydrolase 22 family. As to quaternary structure, monomer.

It localises to the secreted. The catalysed reaction is Hydrolysis of (1-&gt;4)-beta-linkages between N-acetylmuramic acid and N-acetyl-D-glucosamine residues in a peptidoglycan and between N-acetyl-D-glucosamine residues in chitodextrins.. Its function is as follows. Lysozymes have primarily a bacteriolytic function; those in tissues and body fluids are associated with the monocyte-macrophage system and enhance the activity of immunoagents. In Oryctolagus cuniculus (Rabbit), this protein is Lysozyme C (LYZ).